Here is a 616-residue protein sequence, read N- to C-terminus: Polypeptide N-acetylgalactosaminyltransferase 3 (616 aa).

Residues 13 to 33 traverse the membrane as a helical; Signal-anchor for type II membrane protein segment; the sequence is FFHWKLWKFSIIVFVFLVFLF. The catalytic subdomain A stretch occupies residues 182-291; sequence LPTTSIIIVF…YGWLEPLLAR (110 aa). Residues aspartate 275, histidine 277, and histidine 413 each coordinate Mn(2+). Residues 354-416 form a catalytic subdomain B region; that stretch reads PIRTPTFAGG…PCSVVGHVFR (63 aa). Asparagine 482 carries N-linked (GlcNAc...) asparagine glycosylation. The region spanning 512–616 is the Ricin B-type lectin domain; sequence NRMCLDVGEN…FQKWIFGQND (105 aa). A disulfide bridge connects residues cysteine 515 and cysteine 533. The UDP-N-acetyl-alpha-D-galactosamine site is built by aspartate 517, glutamate 520, histidine 534, and asparagine 539. Cysteine 588 and cysteine 601 form a disulfide bridge.

The protein belongs to the glycosyltransferase 2 family. GalNAc-T subfamily. Mn(2+) is required as a cofactor.

The protein resides in the golgi apparatus. It is found in the golgi stack membrane. It carries out the reaction L-seryl-[protein] + UDP-N-acetyl-alpha-D-galactosamine = a 3-O-[N-acetyl-alpha-D-galactosaminyl]-L-seryl-[protein] + UDP + H(+). It catalyses the reaction L-threonyl-[protein] + UDP-N-acetyl-alpha-D-galactosamine = a 3-O-[N-acetyl-alpha-D-galactosaminyl]-L-threonyl-[protein] + UDP + H(+). It participates in protein modification; protein glycosylation. Its function is as follows. Catalyzes the initial reaction in O-linked oligosaccharide biosynthesis, the transfer of an N-acetyl-D-galactosamine residue to a serine or threonine residue on the protein receptor. Glycosylates FGF23. In Taeniopygia guttata (Zebra finch), this protein is Polypeptide N-acetylgalactosaminyltransferase 3 (GALNT3).